A 293-amino-acid chain; its full sequence is Methoxy mycolic acid synthase MmaA3 (293 aa).

S-adenosyl-L-methionine contacts are provided by residues 39–40 (YS), 78–80 (GCG), 100–105 (TLSKNQ), 129–130 (WA), and Ile142. Cys275 is a catalytic residue.

It belongs to the CFA/CMAS family.

It participates in lipid metabolism; mycolic acid biosynthesis. Functionally, involved in the biosynthesis of methoxymycolic acid. It catalyzes the O-methylation of the hydroxy group of the hydroxymycolate to form a methyl ether. In Mycobacterium bovis (strain ATCC BAA-935 / AF2122/97), this protein is Methoxy mycolic acid synthase MmaA3 (cmaB).